Consider the following 741-residue polypeptide: NAD(P)H-quinone oxidoreductase subunit 5, chloroplastic (741 aa).

16 consecutive transmembrane segments (helical) span residues 9–29 (WIIP…LLLV), 40–60 (WAFL…DLSI), 89–109 (IDPL…MVLI), 125–145 (FAYM…CNLI), 147–167 (IYIF…FWFT), 185–205 (GDFG…SFEF), 219–239 (GGVN…GAIA), 258–278 (TPIS…FLVA), 283–303 (LFTV…ITIL), 327–347 (LGYT…FHLI), 354–374 (ALLF…IGYS), 396–416 (TAFL…CFWS), 425–445 (WLYS…TAFY), 546–566 (LLPL…GIPF), 600–620 (FVTN…IASL), and 721–741 (YLFL…FFNL).

Belongs to the complex I subunit 5 family. NDH is composed of at least 16 different subunits, 5 of which are encoded in the nucleus.

It is found in the plastid. Its subcellular location is the chloroplast thylakoid membrane. It catalyses the reaction a plastoquinone + NADH + (n+1) H(+)(in) = a plastoquinol + NAD(+) + n H(+)(out). The enzyme catalyses a plastoquinone + NADPH + (n+1) H(+)(in) = a plastoquinol + NADP(+) + n H(+)(out). In terms of biological role, NDH shuttles electrons from NAD(P)H:plastoquinone, via FMN and iron-sulfur (Fe-S) centers, to quinones in the photosynthetic chain and possibly in a chloroplast respiratory chain. The immediate electron acceptor for the enzyme in this species is believed to be plastoquinone. Couples the redox reaction to proton translocation, and thus conserves the redox energy in a proton gradient. The polypeptide is NAD(P)H-quinone oxidoreductase subunit 5, chloroplastic (ndhF) (Nandina domestica (Heavenly bamboo)).